The chain runs to 267 residues: Apolipoprotein A-I (267 aa).

The first 18 residues, 1–18, serve as a signal peptide directing secretion; it reads MKATVLTLAVLFLTGSQA. A run of 2 repeats spans residues 68–89 and 90–111. The segment at 68–267 is 10 X approximate tandem repeats; sequence LKLLDNWDSV…EEYTKKLSTQ (200 aa). Position 110 is a methionine sulfoxide (M110). One copy of the 3; half-length repeat lies at 112–122; sequence KDLEEVKAKVQ. Repeat copies occupy residues 123–144, 145–166, 167–188, 189–210, and 211–232. M136 is subject to Methionine sulfoxide. One copy of the 9; half-length repeat lies at 233 to 243; sequence PALEDLRQGLL. Residues 244–267 form repeat 10; the sequence is PVLESFKVSFLSALEEYTKKLSTQ.

The protein belongs to the apolipoprotein A1/A4/E family. As to quaternary structure, homodimer. Interacts with APOA1BP and CLU. Component of a sperm activating protein complex (SPAP), consisting of APOA1, an immunoglobulin heavy chain, an immunoglobulin light chain and albumin. Interacts with NDRG1. Interacts with SCGB3A2. Interacts with NAXE and YJEFN3. Glycosylated. In terms of processing, palmitoylated. Post-translationally, phosphorylation sites are present in the extracellular medium. In terms of tissue distribution, major protein of plasma HDL, also found in chylomicrons.

The protein localises to the secreted. Its function is as follows. Participates in the reverse transport of cholesterol from tissues to the liver for excretion by promoting cholesterol efflux from tissues and by acting as a cofactor for the lecithin cholesterol acyltransferase (LCAT). As part of the SPAP complex, activates spermatozoa motility. The polypeptide is Apolipoprotein A-I (APOA1) (Papio hamadryas (Hamadryas baboon)).